Reading from the N-terminus, the 307-residue chain is MFNGEPGPASAGASRNVVRSSSISGEICGSQQAGGGAGTTTAKKRRSSLGAKMVAIVGLTQWSKSTLQLPQPEGATKKLRSNIRRSTETGIAVEMRSRVTRQGSRESTDGSTNSNSSEGTFIFPTRLGAESQFSDFLDGLGPAQIVGRQTLATPPMGDVHIAIMDRSGQLEVEVIEARGLTPKPGSKSLPATYIKAYLLENGACVAKKKTKVAKKTCDPLYQQALLFDEGPQGKVLQVIVWGDYGRMDHKCFMGMAQIMLDELDLSAAVTGWYKLFPTSSVADSTLGSLTRRLSQSSLESATSPSCS.

The segment at 86–120 (STETGIAVEMRSRVTRQGSRESTDGSTNSNSSEGT) is disordered. Positions 109–119 (DGSTNSNSSEG) are enriched in polar residues. Positions 155–273 (PMGDVHIAIM…DLSAAVTGWY (119 aa)) constitute a C2 domain. Phosphoserine is present on residues serine 294 and serine 297.

As to quaternary structure, binds PPFIA3. Does not bind RAB3.

The protein localises to the synapse. Its function is as follows. Regulates synaptic membrane exocytosis. This is Regulating synaptic membrane exocytosis protein 3 (Rims3) from Mus musculus (Mouse).